Reading from the N-terminus, the 260-residue chain is Type III pantothenate kinase (260 aa).

Asp6–Val13 provides a ligand contact to ATP. Substrate is bound at residue Gly108 to Arg111. The active-site Proton acceptor is the Asp110. Asp130 is a K(+) binding site. Thr133 contributes to the ATP binding site. Thr187 contributes to the substrate binding site.

Belongs to the type III pantothenate kinase family. As to quaternary structure, homodimer. The cofactor is NH4(+). K(+) is required as a cofactor.

Its subcellular location is the cytoplasm. It carries out the reaction (R)-pantothenate + ATP = (R)-4'-phosphopantothenate + ADP + H(+). Its pathway is cofactor biosynthesis; coenzyme A biosynthesis; CoA from (R)-pantothenate: step 1/5. In terms of biological role, catalyzes the phosphorylation of pantothenate (Pan), the first step in CoA biosynthesis. This is Type III pantothenate kinase from Rhizorhabdus wittichii (strain DSM 6014 / CCUG 31198 / JCM 15750 / NBRC 105917 / EY 4224 / RW1) (Sphingomonas wittichii).